The primary structure comprises 157 residues: Spore germination protein GerT (157 aa).

The protein localises to the spore coat. Functionally, involved in spore germination; probably required at the earliest stage of germination. The sequence is that of Spore germination protein GerT (gerT) from Bacillus subtilis (strain 168).